We begin with the raw amino-acid sequence, 302 residues long: Sulfate adenylyltransferase subunit 2 (302 aa).

The tract at residues 280 to 302 (RQGRLIDSDQSASMEQKKRQGYF) is disordered.

It belongs to the PAPS reductase family. CysD subfamily. As to quaternary structure, heterodimer composed of CysD, the smaller subunit, and CysN.

It catalyses the reaction sulfate + ATP + H(+) = adenosine 5'-phosphosulfate + diphosphate. The protein operates within sulfur metabolism; hydrogen sulfide biosynthesis; sulfite from sulfate: step 1/3. Functionally, with CysN forms the ATP sulfurylase (ATPS) that catalyzes the adenylation of sulfate producing adenosine 5'-phosphosulfate (APS) and diphosphate, the first enzymatic step in sulfur assimilation pathway. APS synthesis involves the formation of a high-energy phosphoric-sulfuric acid anhydride bond driven by GTP hydrolysis by CysN coupled to ATP hydrolysis by CysD. This Shewanella putrefaciens (strain CN-32 / ATCC BAA-453) protein is Sulfate adenylyltransferase subunit 2.